The following is a 205-amino-acid chain: Suppressor of IKBKE 1 (205 aa).

2 coiled-coil regions span residues T4–Q32 and K154–R192.

Belongs to the SIKE family. In terms of assembly, interacts with IKBKE and TBK1 via its coiled coil region. Interaction with TBK1 is disrupted upon viral infection or TLR3 stimulation. Interacts with CDC42BPB. Associates with the STRIPAK core complex composed of PP2A catalytic and scaffolding subunits, the striatins (PP2A regulatory subunits), the striatin-associated proteins MOB4, STRIP1 and STRIP2, PDCD10 and members of the STE20 kinases, such as STK24 and STK26.

It is found in the cytoplasm. Its function is as follows. Suppressor of IKK-epsilon. Associates with the striatin-interacting phosphatase and kinase (STRIPAK) core complex, forming the extended (SIKE1:SLMAP)STRIPAK complex. The (SIKE1:SLMAP)STRIPAK complex dephosphorylates STK3 leading to the inhibition of Hippo signaling and the control of cell growth. This is Suppressor of IKBKE 1 (sike1) from Xenopus laevis (African clawed frog).